The following is a 458-amino-acid chain: Mitochondrial distribution and morphology protein 10 (458 aa).

The segment at 307–339 is disordered; it reads LDQRRTEPLDAPNTNSSVFSKERVQKKQGPKED. Basic and acidic residues predominate over residues 326–339; it reads SKERVQKKQGPKED.

Belongs to the MDM10 family. As to quaternary structure, component of the ER-mitochondria encounter structure (ERMES) or MDM complex, composed of MMM1, MDM10, MDM12 and MDM34. Associates with the mitochondrial outer membrane sorting assembly machinery SAM(core) complex.

It is found in the mitochondrion outer membrane. In terms of biological role, component of the ERMES/MDM complex, which serves as a molecular tether to connect the endoplasmic reticulum and mitochondria. Components of this complex are involved in the control of mitochondrial shape and protein biogenesis and may function in phospholipid exchange. MDM10 is involved in the late assembly steps of the general translocase of the mitochondrial outer membrane (TOM complex). Functions in the TOM40-specific route of the assembly of outer membrane beta-barrel proteins, including the association of TOM40 with the receptor TOM22 and small TOM proteins. Can associate with the SAM(core) complex as well as the MDM12-MMM1 complex, both involved in late steps of the major beta-barrel assembly pathway, that is responsible for biogenesis of all outer membrane beta-barrel proteins. May act as a switch that shuttles between both complexes and channels precursor proteins into the TOM40-specific pathway. Plays a role in mitochondrial morphology and in the inheritance of mitochondria. The polypeptide is Mitochondrial distribution and morphology protein 10 (Lachancea thermotolerans (strain ATCC 56472 / CBS 6340 / NRRL Y-8284) (Yeast)).